The chain runs to 1295 residues: Serine protease sat autotransporter (1295 aa).

The signal sequence occupies residues 1 to 49 (MNKIYSLKYSAATGGLIAVSELAKRVSGKTNRKLVATMLSLAVAGTVNA). The region spanning 51–300 (NIDISNVWAR…TKYNDKLVSE (250 aa)) is the Peptidase S6 domain. Active-site charge relay system residues include H121, D149, and S256. The 267-residue stretch at 1029–1295 (DINGESGAWA…AINANFRYSF (267 aa)) folds into the Autotransporter domain.

In terms of processing, cleaved to release the mature protein from the outer membrane.

Its subcellular location is the periplasm. The protein resides in the secreted. It is found in the cell surface. It localises to the cell outer membrane. Inhibited by phenylmethylsulfonyl fluoride and Pefabloc. Shows serine protease activity and displays cytophatic activity, including elongation, rounding, and detachment of a proportion of the cells from monolayer in culture. Triggers vacuolation within the cytoplasm of the human bladder and kidney cells. The chain is Serine protease sat autotransporter (sat) from Escherichia coli O6:H1 (strain CFT073 / ATCC 700928 / UPEC).